The chain runs to 294 residues: Cyclin-G1 (294 aa).

This sequence belongs to the cyclin family. Cyclin G subfamily. Binds to B' regulatory B subunits of protein phosphatase A (PP2A) following induction by p53 (in vitro). Highest levels in kidney, heart and skeletal muscle.

The protein localises to the nucleus. In terms of biological role, may play a role in growth regulation. Is associated with G2/M phase arrest in response to DNA damage. May be an intermediate by which p53 mediates its role as an inhibitor of cellular proliferation. This chain is Cyclin-G1 (Ccng1), found in Mus musculus (Mouse).